We begin with the raw amino-acid sequence, 141 residues long: Putative pre-16S rRNA nuclease (141 aa).

The protein belongs to the YqgF nuclease family.

The protein resides in the cytoplasm. In terms of biological role, could be a nuclease involved in processing of the 5'-end of pre-16S rRNA. The protein is Putative pre-16S rRNA nuclease of Cupriavidus pinatubonensis (strain JMP 134 / LMG 1197) (Cupriavidus necator (strain JMP 134)).